We begin with the raw amino-acid sequence, 197 residues long: Dephospho-CoA kinase (197 aa).

Residues 2–197 (IIGITGGIAS…SALLLLANPR (196 aa)) form the DPCK domain. Residue 10–15 (ASGKST) participates in ATP binding.

It belongs to the CoaE family.

Its subcellular location is the cytoplasm. The enzyme catalyses 3'-dephospho-CoA + ATP = ADP + CoA + H(+). Its pathway is cofactor biosynthesis; coenzyme A biosynthesis; CoA from (R)-pantothenate: step 5/5. Functionally, catalyzes the phosphorylation of the 3'-hydroxyl group of dephosphocoenzyme A to form coenzyme A. The polypeptide is Dephospho-CoA kinase (Streptococcus pyogenes serotype M1).